A 151-amino-acid polypeptide reads, in one-letter code: MEKPAGFWIRFLAYFIDGIIVSVPSYIILFIINSVFVAGAVATNPYMTEEEYLVKYMTLAFLPTMLIMIVISVLYYGLLTASKMQGTLGKKILGLKVVNEQGERVSVGQGIGRYFAYILSGIIFYIGFIMIAFGEKKGLHDIICKTRVVYK.

3 consecutive transmembrane segments (helical) span residues 12-32 (LAYF…LFII), 59-79 (LAFL…YGLL), and 114-134 (YFAY…IAFG).

It is found in the cell membrane. This is an uncharacterized protein from Bacillus subtilis (strain 168).